The following is a 91-amino-acid chain: Cell division topological specificity factor (91 aa).

It belongs to the MinE family.

In terms of biological role, prevents the cell division inhibition by proteins MinC and MinD at internal division sites while permitting inhibition at polar sites. This ensures cell division at the proper site by restricting the formation of a division septum at the midpoint of the long axis of the cell. This is Cell division topological specificity factor from Desulfitobacterium hafniense (strain DSM 10664 / DCB-2).